The following is a 258-amino-acid chain: Alcohol dehydrogenase 2 (258 aa).

An NAD(+)-binding site is contributed by 9–33; sequence IFVGGLGFIGYEACKQLMAKNMASF. Residue serine 137 participates in substrate binding. The Proton acceptor role is filled by tyrosine 150.

It belongs to the short-chain dehydrogenases/reductases (SDR) family. In terms of assembly, homodimer.

It catalyses the reaction a primary alcohol + NAD(+) = an aldehyde + NADH + H(+). It carries out the reaction a secondary alcohol + NAD(+) = a ketone + NADH + H(+). This is Alcohol dehydrogenase 2 (ADH2) from Ceratitis rosa (Natal fruit fly).